Reading from the N-terminus, the 589-residue chain is Aspartate--tRNA ligase (589 aa).

Residue E174 participates in L-aspartate binding. The segment at 198–201 is aspartate; sequence QLFK. Position 220 (R220) interacts with L-aspartate. ATP-binding positions include 220–222 and Q229; that span reads RDE. H448 lines the L-aspartate pocket. E483 contributes to the ATP binding site. L-aspartate is bound at residue R490. Residue 535–538 participates in ATP binding; sequence GIDR.

Belongs to the class-II aminoacyl-tRNA synthetase family. Type 1 subfamily. In terms of assembly, homodimer.

Its subcellular location is the cytoplasm. It carries out the reaction tRNA(Asp) + L-aspartate + ATP = L-aspartyl-tRNA(Asp) + AMP + diphosphate. Functionally, catalyzes the attachment of L-aspartate to tRNA(Asp) in a two-step reaction: L-aspartate is first activated by ATP to form Asp-AMP and then transferred to the acceptor end of tRNA(Asp). The protein is Aspartate--tRNA ligase of Xylella fastidiosa (strain M12).